The sequence spans 133 residues: ATP synthase epsilon chain (133 aa).

A disordered region spans residues 103–133 (VSQMEGQEPSTEKIKAQQNFNRARARVQATK).

The protein belongs to the ATPase epsilon chain family. In terms of assembly, F-type ATPases have 2 components, CF(1) - the catalytic core - and CF(0) - the membrane proton channel. CF(1) has five subunits: alpha(3), beta(3), gamma(1), delta(1), epsilon(1). CF(0) has three main subunits: a, b and c.

The protein localises to the cellular thylakoid membrane. Produces ATP from ADP in the presence of a proton gradient across the membrane. This chain is ATP synthase epsilon chain, found in Prochlorococcus marinus (strain MIT 9313).